The sequence spans 34 residues: N(4)-(Beta-N-acetylglucosaminyl)-L-asparaginase (34 aa).

Thr18 functions as the Nucleophile in the catalytic mechanism.

It belongs to the Ntn-hydrolase family. In terms of assembly, heterotetramer of two alpha and two beta chains arranged as a dimer of alpha/beta heterodimers. In terms of processing, cleaved into an alpha and beta chain by autocatalysis; this activates the enzyme. The N-terminal residue of the beta subunit is responsible for the nucleophile hydrolase activity. N-glycosylated.

The protein resides in the lysosome. It catalyses the reaction N(4)-(beta-N-acetyl-D-glucosaminyl)-L-asparagine + H2O = N-acetyl-beta-D-glucosaminylamine + L-aspartate + H(+). In terms of biological role, cleaves the GlcNAc-Asn bond which joins oligosaccharides to the peptide of asparagine-linked glycoproteins. The protein is N(4)-(Beta-N-acetylglucosaminyl)-L-asparaginase (AGA) of Sus scrofa (Pig).